A 330-amino-acid chain; its full sequence is MSSAVASKGMNQGSEFDDNKDMCPICKTDRYLSPDVRFLVNPECYHKICESCVDRIFSLGPAPCPYKSCDKILRKNKFKTQIFDDVGVEKEVDIRKRVFNVFNKTLEDFDNDLEAYNKYLEEVEDIVYKLDNKIDVVETEEKLRTYEELNKQLIMNNMERSKKDLENFEQRQQFEKEMRMKKRMLERQIESEDKMNKEWAKREIVNRLASSTNADDVIEGVKNTVKLKKSSARRKLEEINRVLQNNPYSSLMLSQGLSRKEDNVPFTPFNGDRDLDKRYTIDQESYDDPFIKDLENRKDYIASGFRSDFVYDRMLTEAFMGLGCVVAEEV.

The RING-type zinc-finger motif lies at C23–S68.

The protein resides in the nucleus. Acts as a component of the general transcription and DNA repair factor IIH (TFIIH or factor B), which is essential for both basal and activated transcription, and is involved in nucleotide excision repair (NER) of damaged DNA. TFIIH as CTD kinase activity and DNA-dependent ATPase activity, and is essential for polymerase II transcription. The sequence is that of RNA polymerase II transcription factor B subunit 3 (TFB3) from Candida glabrata (strain ATCC 2001 / BCRC 20586 / JCM 3761 / NBRC 0622 / NRRL Y-65 / CBS 138) (Yeast).